Consider the following 191-residue polypeptide: Ion-translocating oxidoreductase complex subunit B (191 aa).

Positions 1 to 26 (MSLVLVAVLALLGLCLIAGAILGFAA) are hydrophobic. A 4Fe-4S domain is found at 32-90 (EGDPIAEQINALLPQTQCGQCGYPGCKPYAEAIAGGDKINKCPPGGEATIQALADLLDV). [4Fe-4S] cluster is bound by residues cysteine 49, cysteine 52, cysteine 57, cysteine 73, cysteine 114, cysteine 117, cysteine 120, cysteine 124, cysteine 144, cysteine 147, cysteine 150, and cysteine 154. 4Fe-4S ferredoxin-type domains are found at residues 105-134 (MVAF…GAAR) and 135-164 (QMHT…MIEV).

This sequence belongs to the 4Fe4S bacterial-type ferredoxin family. RnfB subfamily. In terms of assembly, the complex is composed of six subunits: RnfA, RnfB, RnfC, RnfD, RnfE and RnfG. [4Fe-4S] cluster is required as a cofactor.

It localises to the cell inner membrane. In terms of biological role, part of a membrane-bound complex that couples electron transfer with translocation of ions across the membrane. This Ectopseudomonas mendocina (strain ymp) (Pseudomonas mendocina) protein is Ion-translocating oxidoreductase complex subunit B.